A 550-amino-acid polypeptide reads, in one-letter code: Probable methionine--tRNA ligase, cytoplasmic (550 aa).

The 'HIGH' region signature appears at 10 to 20 (PYVNNQPHLGN). A 'KMSKS' region motif is present at residues 328-332 (KFSKS). Lysine 331 contributes to the ATP binding site.

It belongs to the class-I aminoacyl-tRNA synthetase family.

It localises to the cytoplasm. It carries out the reaction tRNA(Met) + L-methionine + ATP = L-methionyl-tRNA(Met) + AMP + diphosphate. This chain is Probable methionine--tRNA ligase, cytoplasmic, found in Encephalitozoon cuniculi (strain GB-M1) (Microsporidian parasite).